A 431-amino-acid chain; its full sequence is MGKNVVVLGTQWGDEGKGKIVDLLTEQAKYVVRYQGGHNAGHTLVIDGEKTVLHLIPSGILRDNVKCIIGNGVVVAPDALMKEINMLKGRGVPVEERLLISEACPLILPFHCALDIAREKARGNQAIGTTGRGIGPAYEDKVSRRGLRIGDLFNAELFATKLQEVMKYHNFMLTEYYKVEAVDYQQTLDDALAIADYLKSMCTDVSEMLDVARKAGEPILFEGAQGTLLDIDHGTYPFVTSSNTTAGGVATGSGFGPRHLDYVLGIMKAYTTRVGAGPFPTELANEIGDYIGEKGQEFGATTGRKRRPGWLDAVAMRRAVQINSVSGFCLTKLDVLDGLKEVKICVGYQYADGTVSKVTPLAAEGYDLVTPIYETMPGWSETTFGATTIEQLPPAAINYIKRLEELLETPIDIISTGPDRNETMILVNPFK.

GTP is bound by residues 13 to 19 (GDEGKGK) and 41 to 43 (GHT). The active-site Proton acceptor is the D14. 2 residues coordinate Mg(2+): D14 and G41. IMP contacts are provided by residues 14–17 (DEGK), 39–42 (NAGH), T130, R144, Q225, T240, and R304. H42 functions as the Proton donor in the catalytic mechanism. 300 to 306 (ATTGRKR) serves as a coordination point for substrate. GTP contacts are provided by residues R306, 332–334 (KLD), and 415–417 (STG).

Belongs to the adenylosuccinate synthetase family. Homodimer. It depends on Mg(2+) as a cofactor.

The protein resides in the cytoplasm. It carries out the reaction IMP + L-aspartate + GTP = N(6)-(1,2-dicarboxyethyl)-AMP + GDP + phosphate + 2 H(+). It functions in the pathway purine metabolism; AMP biosynthesis via de novo pathway; AMP from IMP: step 1/2. Functionally, plays an important role in the de novo pathway of purine nucleotide biosynthesis. Catalyzes the first committed step in the biosynthesis of AMP from IMP. The sequence is that of Adenylosuccinate synthetase from Shewanella frigidimarina (strain NCIMB 400).